Here is a 224-residue protein sequence, read N- to C-terminus: Putative cytochrome c-type biogenesis protein DbsD-like (224 aa).

The next 5 helical transmembrane spans lie at 32–52 (FIFL…ILPV), 74–94 (FLFC…ATLI), 104–124 (GIPT…LNIV), 150–170 (GIGI…LVWI), and 176–196 (IFTG…PIII).

This sequence belongs to the DsbD family.

The protein localises to the plastid. Its subcellular location is the chloroplast membrane. Functionally, could be involved in cytochrome c synthesis. This is Putative cytochrome c-type biogenesis protein DbsD-like from Pyropia yezoensis (Susabi-nori).